The primary structure comprises 962 residues: Glycine dehydrogenase (decarboxylating) (962 aa).

Lysine 709 carries the N6-(pyridoxal phosphate)lysine modification.

This sequence belongs to the GcvP family. In terms of assembly, the glycine cleavage system is composed of four proteins: P, T, L and H. Pyridoxal 5'-phosphate is required as a cofactor.

It catalyses the reaction N(6)-[(R)-lipoyl]-L-lysyl-[glycine-cleavage complex H protein] + glycine + H(+) = N(6)-[(R)-S(8)-aminomethyldihydrolipoyl]-L-lysyl-[glycine-cleavage complex H protein] + CO2. Its function is as follows. The glycine cleavage system catalyzes the degradation of glycine. The P protein binds the alpha-amino group of glycine through its pyridoxal phosphate cofactor; CO(2) is released and the remaining methylamine moiety is then transferred to the lipoamide cofactor of the H protein. This chain is Glycine dehydrogenase (decarboxylating), found in Shewanella baltica (strain OS155 / ATCC BAA-1091).